The following is a 287-amino-acid chain: Shikimate dehydrogenase (NADP(+)) (287 aa).

Shikimate-binding positions include 18-20 (SYS) and T66. K70 (proton acceptor) is an active-site residue. E82 contacts NADP(+). Shikimate-binding residues include N91 and D106. NADP(+) is bound by residues 130–134 (GSGGA) and M228. Y230 contacts shikimate. G251 contributes to the NADP(+) binding site.

It belongs to the shikimate dehydrogenase family. In terms of assembly, homodimer.

The enzyme catalyses shikimate + NADP(+) = 3-dehydroshikimate + NADPH + H(+). It participates in metabolic intermediate biosynthesis; chorismate biosynthesis; chorismate from D-erythrose 4-phosphate and phosphoenolpyruvate: step 4/7. Involved in the biosynthesis of the chorismate, which leads to the biosynthesis of aromatic amino acids. Catalyzes the reversible NADPH linked reduction of 3-dehydroshikimate (DHSA) to yield shikimate (SA). This chain is Shikimate dehydrogenase (NADP(+)), found in Chlorobium chlorochromatii (strain CaD3).